We begin with the raw amino-acid sequence, 311 residues long: MGSPNSLFEVESFLKNMFNDPLILGIKNTFARKMLASFITHSRVEETKKNYQAIGGKSPLTAHTLNLTNKLNELDCKRFYTYAMRYTPPFAYQVLEDIKTQGIQSVVLFSLYPQFSYSTIASSLIDAKAALQKLAFTPTLYEISSYHTHPDYISCIIERIKESLGADNPNEFVLLLSAHSLPQSRIDEGDPYQKQCEENKEVIQKALESEGIVFKKIALAYQSKVGRMKWIGPSTKETITKYKKHKMIIFPLSFTLDNSETEYELKILYASLAKELNVPQYRVCSCFNDNERFAKSIMNILEEHLRGKAEV.

Residues H179 and E260 each contribute to the Fe cation site.

The protein belongs to the ferrochelatase family.

It is found in the cytoplasm. It catalyses the reaction heme b + 2 H(+) = protoporphyrin IX + Fe(2+). It functions in the pathway porphyrin-containing compound metabolism; protoheme biosynthesis; protoheme from protoporphyrin-IX: step 1/1. Functionally, catalyzes the ferrous insertion into protoporphyrin IX. This chain is Ferrochelatase, found in Helicobacter hepaticus (strain ATCC 51449 / 3B1).